The following is a 326-amino-acid chain: ATP synthase gamma chain (326 aa).

Belongs to the ATPase gamma chain family. As to quaternary structure, F-type ATPases have 2 components, CF(1) - the catalytic core - and CF(0) - the membrane proton channel. CF(1) has five subunits: alpha(3), beta(3), gamma(1), delta(1), epsilon(1). CF(0) has three main subunits: a, b and c.

The protein localises to the cell membrane. Functionally, produces ATP from ADP in the presence of a proton gradient across the membrane. The gamma chain is believed to be important in regulating ATPase activity and the flow of protons through the CF(0) complex. The chain is ATP synthase gamma chain from Rhodococcus jostii (strain RHA1).